The sequence spans 1107 residues: MRLIITFLMAWCLSWGAYAATAPDSKQITQELEQAKAAKPAQPEVVEALQSALNALEERKGSLERIKQYQQVIDNYPKLSATLRAQLNNMRDEPRSVSPGMSTDALNQEILQVSSQLLDKSRQAQQEQERAREIADSLNQLPQQQTDARRQLNEIERRLGTLTGNTPLNQAQNFALQSDSARLKALVDELELAQLSANNRQELARLRSELAEKESQQLDAYLQALRNQLNSQRQLEAERALESTELLAENSADLPKDIVAQFKINRELSAALNQQAQRMDLVASQQRQAASQTLQVRQALNTLREQSQWLGSSNLLGEALRAQVARLPEMPKPQQLDTEMAQLRVQRLRYEDLLNKQPLLRQIHQADGQPLTAEQNRILEAQLRTQRELLNSLLQGGDTLLLELTKLKVSNGQLEDALKEVNEATHRYLFWTSDVRPMTIAWPLEIAQDLRRLISLDTFSQLGKASVMMLTSKETILPLFGALILVGCSIYSRRYFTRFLERSAAKVGKVTQDHFWLTLRTLFWSILVASPLPVLWMTLGYGLREAWPYPLAVAIGDGVTATVPLLWVVMICATFARPNGLFIAHFGWPRERVSRGMRYYLMSIGLIVPLIMALMMFDNLDDREFSGSLGRLCFILICGALAVVTLSLKKAGIPLYLNKEGSGDNITNHMLWNMMIGAPLVAILASAVGYLATAQALLARLETSVAIWFLLLVVYHVIRRWMLIQRRRLAFDRAKHRRAEMLAQRARGEEEAHHHSSPEGAIEVDESEVDLDAISAQSLRLVRSILMLIALLSVIVLWSEIHSAFGFLENISLWDVTSTVQGVESLEPITLGAVLIAILVFIITTQLVRNLPALLELAILQHLDLTPGTGYAITTITKYLLMLIGGLVGFSMIGIEWSKLQWLVAALGVGLGFGLQEIFANFISGLIILFEKPIRIGDTVTIRDLTGSVTKINTRATTISDWDRKEIIVPNKAFITEQFINWSLSDSVTRVVLTIPAPADANSEEVTEILLTAARRCSLVIDNPAPEVFLVDLQQGIQIFELRIYAAEMGHRMPLRHEIHQLILAGFHAHGIDMPFPPFQMRLESLNGKQTGRTLTSAGKGRQAGSL.

Positions 1-19 (MRLIITFLMAWCLSWGAYA) are cleaved as a signal peptide. Transmembrane regions (helical) follow at residues 467 to 487 (VMMLTSKETILPLFGALILVG), 522 to 542 (LFWSILVASPLPVLWMTLGYG), 551 to 571 (LAVAIGDGVTATVPLLWVVMI), 600 to 620 (YLMSIGLIVPLIMALMMFDNL), 628 to 648 (SLGRLCFILICGALAVVTLSL), 674 to 694 (MMIGAPLVAILASAVGYLATA), 698 to 718 (LARLETSVAIWFLLLVVYHVI), 785 to 805 (ILMLIALLSVIVLWSEIHSAF), 828 to 848 (PITLGAVLIAILVFIITTQLV), 875 to 895 (TITKYLLMLIGGLVGFSMIGI), and 910 to 930 (GLGFGLQEIFANFISGLIILF).

The protein belongs to the MscS (TC 1.A.23) family. Homoheptamer.

Its subcellular location is the cell inner membrane. Its function is as follows. Mechanosensitive channel that protects cells against hypoosmotic stress when highly overexpressed. Gates spontaneously in response to increased membrane tension. The chain is Miniconductance mechanosensitive channel MscM (mscM) from Escherichia coli (strain K12).